The chain runs to 425 residues: Glutamyl-tRNA reductase (425 aa).

Residues 49-52 (TCNR), serine 107, 112-114 (EPQ), and glutamine 118 contribute to the substrate site. Cysteine 50 serves as the catalytic Nucleophile. 187–192 (GAGETI) is a binding site for NADP(+).

This sequence belongs to the glutamyl-tRNA reductase family. As to quaternary structure, homodimer.

It catalyses the reaction (S)-4-amino-5-oxopentanoate + tRNA(Glu) + NADP(+) = L-glutamyl-tRNA(Glu) + NADPH + H(+). The protein operates within porphyrin-containing compound metabolism; protoporphyrin-IX biosynthesis; 5-aminolevulinate from L-glutamyl-tRNA(Glu): step 1/2. Its function is as follows. Catalyzes the NADPH-dependent reduction of glutamyl-tRNA(Glu) to glutamate 1-semialdehyde (GSA). In Pseudomonas syringae pv. tomato (strain ATCC BAA-871 / DC3000), this protein is Glutamyl-tRNA reductase.